A 528-amino-acid polypeptide reads, in one-letter code: Abrin-a (528 aa).

Residue glutamine 1 is modified to Pyrrolidone carboxylic acid. Glutamate 164 is an active-site residue. Intrachain disulfides connect cysteine 247/cysteine 269, cysteine 286/cysteine 305, and cysteine 329/cysteine 346. Residues 273–400 enclose the Ricin B-type lectin 1 domain; it reads YEPTVRIGGR…YLMRQGWRTG (128 aa). One copy of the 1-alpha repeat lies at 283 to 325; it reads DGMCVDVYDNGYHNGNRIIMWKCKDRLEENQLWTLKSDKTIRS. Residues 326 to 366 form a 1-beta repeat; that stretch reads NGKCLTTYGYAPGSYVMIYDCTSAVAEATYWEIWDNGTIIN. Asparagine 361 and asparagine 401 each carry an N-linked (GlcNAc...) asparagine glycan. Residues 369-401 form a 1-gamma repeat; that stretch reads SALVLSAESSSMGGTLTVQTNEYLMRQGWRTGN. A Ricin B-type lectin 2 domain is found at 403-527; that stretch reads TSPFVTSISG…GKPNQIWLTL (125 aa). One copy of the 2-alpha repeat lies at 414–449; it reads SDLCMQAQGSNVWMADCDSNKKEQQWALYTDGSIRS. 2 disulfides stabilise this stretch: cysteine 417-cysteine 430 and cysteine 456-cysteine 473. The 2-beta repeat unit spans residues 453–492; it reads TNNCLTSKDHKQGSTILLMGCSNGWASQRWVFKNDGSIYS. The stretch at 495-528 is one 2-gamma repeat; that stretch reads DDMVMDVKGSDPSLKQIILWPYTGKPNQIWLTLF.

It in the N-terminal section; belongs to the ribosome-inactivating protein family. Type 2 RIP subfamily. Disulfide-linked dimer of A and B chains.

It carries out the reaction Endohydrolysis of the N-glycosidic bond at one specific adenosine on the 28S rRNA.. Its function is as follows. The A chain is responsible for inhibiting protein synthesis through the catalytic inactivation of 60S ribosomal subunits by removing adenine from position 4,324 of 28S rRNA. Abrin-a is more toxic than ricin. Functionally, the B chain is a galactose-specific lectin that facilitates the binding of abrin to the cell membrane that precedes endocytosis. The polypeptide is Abrin-a (Abrus precatorius (Indian licorice)).